Consider the following 413-residue polypeptide: Envelope glycoprotein M (413 aa).

At 1-19 (MGNYYYGGQESRLERISWR) the chain is on the intravirion side. Residues 20–40 (MWMVEAACYIVLVLLTLVSSF) form a helical membrane-spanning segment. Residues 41 to 88 (ASLSSTTGFPCFVGTVGESSFGGDLMGHGMTPARRDGVKIFFMSSPST) are Virion surface-facing. A helical membrane pass occupies residues 89–109 (LFVVFSAVFVWLVVAVYLLLG). Residues 110-133 (GVRVKMCNFDSSYGASELSSAVAT) are Intravirion-facing. A helical transmembrane segment spans residues 134–154 (MTSLVTLSITAWAWQVFVLML). The Virion surface segment spans residues 155–160 (SYRQLT). A helical transmembrane segment spans residues 161-181 (LAAVAFVGIFIAGLVFMLSFA). Topologically, residues 182-218 (SGGKSPENYATFNSQLKTVCKDVHAVITAFKAVVLNL) are intravirion. Residues 219–239 (FCVVFGVWHLMLVMLGAVIMV) form a helical membrane-spanning segment. Residues 240 to 251 (LNFGVSIPKATT) are Virion surface-facing. The chain crosses the membrane as a helical span at residues 252 to 272 (GALVVFIVLGLVYLMMIELVV). Topologically, residues 273-277 (SRYVH) are intravirion. A helical membrane pass occupies residues 278-298 (VLLGPHLGMIIALGIAGTSAL). Residues 299–312 (SYAETLDEIMYASW) are Virion surface-facing. Residues 313-333 (KPVAAGILGAFSVIVLALAVL) form a helical membrane-spanning segment. Residues 334-413 (RAVRSYKFHK…EDVIYENMKY (80 aa)) lie on the Intravirion side of the membrane.

Belongs to the herpesviridae glycoprotein M family. As to quaternary structure, interacts (via N-terminus) with gN (via N-terminus). The gM-gN heterodimer forms the gCII complex.

The protein localises to the virion membrane. It localises to the host Golgi apparatus. Its subcellular location is the host trans-Golgi network. It is found in the host endosome membrane. The protein resides in the host nucleus inner membrane. Its function is as follows. Envelope glycoprotein important for virion assembly and egress. Plays a role in the correct incorporation of gH-gL into virion membrane. Directs the glycoprotein N (gN) to the host trans-Golgi network. The sequence is that of Envelope glycoprotein M from Psittacid herpesvirus 1 (isolate Amazon parrot/-/97-0001/1997) (PsHV-1).